A 256-amino-acid chain; its full sequence is MDGGYGSVTIVHDARSPEDVFQDFCGRRSGIVKALTIEVEKFYKQCDPEKENLCLYGLPNGTWAVTLPADEVPPELPEPALGHNFARDGMQEKDWLSLIAVHSDSWLLSVAFYFGARFGFDKKARERLFMMTSSLPTVFEVVSGGVNTQSKTANGSSKNKSGSKPPKRPNSDSKPQKQVQAKYEEENGGRGNGGDEDQAETICGACGEAYANGEFWICCDICETWFHGKCVRITPAKAEHIKHYKCPGCSNKRTRE.

Residues 149–195 are disordered; it reads QSKTANGSSKNKSGSKPPKRPNSDSKPQKQVQAKYEEENGGRGNGGD. Positions 154–164 are enriched in low complexity; sequence NGSSKNKSGSK. The PHD-type zinc finger occupies 200-252; that stretch reads ETICGACGEAYANGEFWICCDICETWFHGKCVRITPAKAEHIKHYKCPGCSNK.

Belongs to the Alfin family. Interacts with H3K4me3 and to a lesser extent with H3K4me2.

Its subcellular location is the nucleus. Functionally, histone-binding component that specifically recognizes H3 tails trimethylated on 'Lys-4' (H3K4me3), which mark transcription start sites of virtually all active genes. This chain is PHD finger protein ALFIN-LIKE 4, found in Oryza sativa subsp. indica (Rice).